A 168-amino-acid chain; its full sequence is ATP synthase subunit b (168 aa).

A helical membrane pass occupies residues 10–30; that stretch reads LYLGDMLFYLVSFLIMAALVW. Residues 61-80 form a disordered region; the sequence is EAQKLAAKRQEELKGSRQEA.

This sequence belongs to the ATPase B chain family. F-type ATPases have 2 components, F(1) - the catalytic core - and F(0) - the membrane proton channel. F(1) has five subunits: alpha(3), beta(3), gamma(1), delta(1), epsilon(1). F(0) has three main subunits: a(1), b(2) and c(10-14). The alpha and beta chains form an alternating ring which encloses part of the gamma chain. F(1) is attached to F(0) by a central stalk formed by the gamma and epsilon chains, while a peripheral stalk is formed by the delta and b chains.

The protein localises to the cell membrane. F(1)F(0) ATP synthase produces ATP from ADP in the presence of a proton or sodium gradient. F-type ATPases consist of two structural domains, F(1) containing the extramembraneous catalytic core and F(0) containing the membrane proton channel, linked together by a central stalk and a peripheral stalk. During catalysis, ATP synthesis in the catalytic domain of F(1) is coupled via a rotary mechanism of the central stalk subunits to proton translocation. Its function is as follows. Component of the F(0) channel, it forms part of the peripheral stalk, linking F(1) to F(0). The chain is ATP synthase subunit b from Limosilactobacillus fermentum (strain NBRC 3956 / LMG 18251) (Lactobacillus fermentum).